We begin with the raw amino-acid sequence, 273 residues long: Neuferricin (273 aa).

Positions 1–22 (MLGYLAAAALCLAAVLLMRLDH) are cleaved as a signal peptide. In terms of domain architecture, Cytochrome b5 heme-binding spans 44-143 (GRLMSKEELS…QNYITIGKLT (100 aa)).

Belongs to the cytochrome b5 family. MAPR subfamily.

Its subcellular location is the secreted. Heme-binding protein which promotes neuronal but not astrocyte differentiation. This Xenopus tropicalis (Western clawed frog) protein is Neuferricin (cyb5d2).